Reading from the N-terminus, the 336-residue chain is Putative ALA-interacting subunit 4 (336 aa).

Residues 36-56 (VILTFLVSGVVFIPLGVICLF) traverse the membrane as a helical segment. N-linked (GlcNAc...) asparagine glycosylation is present at N94. Positions 127–142 (RQDGQLRSPKDEHETK) are enriched in basic and acidic residues. Residues 127 to 148 (RQDGQLRSPKDEHETKSCAPED) form a disordered region. N167 is a glycosylation site (N-linked (GlcNAc...) asparagine). Residues 290-310 (FLGIAYLTVGSICLFLAVSFS) traverse the membrane as a helical segment. N-linked (GlcNAc...) asparagine glycosylation is present at N329.

This sequence belongs to the CDC50/LEM3 family. In terms of tissue distribution, expressed in flowers. May be restricted to pollen grains.

The protein resides in the membrane. This is Putative ALA-interacting subunit 4 (ALIS4) from Arabidopsis thaliana (Mouse-ear cress).